Reading from the N-terminus, the 356-residue chain is MASKSDAIAPEKEKALNLVLSQIERNFGKGAIMRLGDAARLRVETISTGALTLDLALGGGLPKGRIIEVYGPESSGKTTLTLHAIAEVQKQGGIAAFVDAEHALDPVYATSVGVDIDNLLISQPDTGEMALEIVDQLVRSAAVDIVVIDSVAALVPRAEIEGEMGDAQVGLQARLMSQAMRKITGNIGKSGCTVIFLNQLRQKIGVTYGSPETTTGGQALKFYASVRLDIRRIQTLKKGTEEYGTRAKVKVVKNKVAPPFRIAEFDILFGKGISTLGCLVDLAEETGVILRKGAWYSYNGDNIGQGRDNTITHLEEHPDFRATVEQQVREKLALGAQVSANTVGAAPAKTAEDTDS.

71-78 is an ATP binding site; the sequence is GPESSGKT.

The protein belongs to the RecA family.

The protein localises to the cytoplasm. Functionally, can catalyze the hydrolysis of ATP in the presence of single-stranded DNA, the ATP-dependent uptake of single-stranded DNA by duplex DNA, and the ATP-dependent hybridization of homologous single-stranded DNAs. It interacts with LexA causing its activation and leading to its autocatalytic cleavage. This is Protein RecA from Synechococcus elongatus (strain ATCC 33912 / PCC 7942 / FACHB-805) (Anacystis nidulans R2).